A 259-amino-acid chain; its full sequence is Type III pantothenate kinase (259 aa).

9–16 (DAGNSRIK) contacts ATP. Residues Y93 and 100–103 (GSDR) each bind substrate. The Proton acceptor role is filled by D102. Residue T126 coordinates ATP. T190 contacts substrate.

The protein belongs to the type III pantothenate kinase family. As to quaternary structure, homodimer. Requires NH4(+) as cofactor. K(+) is required as a cofactor.

It localises to the cytoplasm. It catalyses the reaction (R)-pantothenate + ATP = (R)-4'-phosphopantothenate + ADP + H(+). It participates in cofactor biosynthesis; coenzyme A biosynthesis; CoA from (R)-pantothenate: step 1/5. Its function is as follows. Catalyzes the phosphorylation of pantothenate (Pan), the first step in CoA biosynthesis. The chain is Type III pantothenate kinase from Burkholderia pseudomallei (strain K96243).